The sequence spans 97 residues: Signal recognition particle 19 kDa protein (97 aa).

The protein belongs to the SRP19 family. As to quaternary structure, part of the signal recognition particle protein translocation system, which is composed of SRP and FtsY. Archaeal SRP consists of a 7S RNA molecule of 300 nucleotides and two protein subunits: SRP54 and SRP19.

The protein resides in the cytoplasm. Functionally, involved in targeting and insertion of nascent membrane proteins into the cytoplasmic membrane. Binds directly to 7S RNA and mediates binding of the 54 kDa subunit of the SRP. This is Signal recognition particle 19 kDa protein from Methanocella arvoryzae (strain DSM 22066 / NBRC 105507 / MRE50).